Here is a 142-residue protein sequence, read N- to C-terminus: Nucleoside diphosphate kinase (142 aa).

Lys10, Phe58, Arg86, Thr92, Arg103, and Asn113 together coordinate ATP. The active-site Pros-phosphohistidine intermediate is the His116.

Belongs to the NDK family. As to quaternary structure, homotetramer. Requires Mg(2+) as cofactor.

The protein resides in the cytoplasm. It carries out the reaction a 2'-deoxyribonucleoside 5'-diphosphate + ATP = a 2'-deoxyribonucleoside 5'-triphosphate + ADP. It catalyses the reaction a ribonucleoside 5'-diphosphate + ATP = a ribonucleoside 5'-triphosphate + ADP. In terms of biological role, major role in the synthesis of nucleoside triphosphates other than ATP. The ATP gamma phosphate is transferred to the NDP beta phosphate via a ping-pong mechanism, using a phosphorylated active-site intermediate. The sequence is that of Nucleoside diphosphate kinase from Ehrlichia chaffeensis (strain ATCC CRL-10679 / Arkansas).